The following is a 374-amino-acid chain: Phosphomevalonate kinase (374 aa).

This sequence belongs to the GHMP kinase family. In terms of assembly, homodimer. Mg(2+) is required as a cofactor.

The catalysed reaction is (R)-5-phosphomevalonate + ATP = (R)-5-diphosphomevalonate + ADP. It participates in isoprenoid biosynthesis; isopentenyl diphosphate biosynthesis via mevalonate pathway; isopentenyl diphosphate from (R)-mevalonate: step 2/3. In terms of biological role, catalyzes the phosphorylation of (R)-mevalonate 5-phosphate (MVAP) to (R)-mevalonate 5-diphosphate (MVAPP). Functions in the mevalonate (MVA) pathway leading to isopentenyl diphosphate (IPP), a key precursor for the biosynthesis of isoprenoid compounds. The polypeptide is Phosphomevalonate kinase (Streptomyces sp. (strain CL190)).